Reading from the N-terminus, the 363-residue chain is Two-pore potassium channel 1 (363 aa).

Positions 1–61 are disordered; the sequence is MSSDAARTPL…DDVKIDEPPP (61 aa). At 1-78 the chain is on the cytoplasmic side; the sequence is MSSDAARTPL…FSDLNPNLRR (78 aa). Positions 31–42 are enriched in basic residues; the sequence is SSRKRRLRRSRS. The helical transmembrane segment at 79-99 threads the bilayer; it reads VIMFLALYLTIGTLCFYLVRD. The segment at residues 111–130 is an intramembrane region (pore-forming); the sequence is DALYFCIVTMTTVGYGDLVP. Residues 137–157 traverse the membrane as a helical segment; it reads LLACAFVFSGMVLVGHLLSRA. Residues 158-197 are Cytoplasmic-facing; sequence ADYLVEKQEALLVRAFHLRQSFGPTDILKELHTNKLRYKC. Residues 198 to 218 form a helical membrane-spanning segment; the sequence is YATCLVLVVLFIVGTIFLVMV. Residues 225 to 244 constitute an intramembrane region (pore-forming); that stretch reads SAFYCVCSTVTTLGYGDKSF. The chain crosses the membrane as a helical span at residues 251-271; that stretch reads LFAVFWILTSSICLAQFFLYV. The Cytoplasmic segment spans residues 272–363; that stretch reads AELNTENKQR…LAQTTSQIQR (92 aa). 2 EF-hand domains span residues 288 to 323 and 327 to 362; these read LTRR…EMGK and KDIS…SQIQ. An Endoplasmic reticulum release signal motif is present at residues 296-298; that stretch reads DLE. 9 residues coordinate Ca(2+): D301, D303, D305, E312, D340, D342, S344, T346, and D351.

Belongs to the two pore domain potassium channel (TC 1.A.1.7) family. In terms of assembly, homodimer. Interacts with GRF1 and GRF6, but only GRF6 modulates the channel activity. Post-translationally, phosphorylation at Ser-42 increases and stabilizes the interaction with 14-3-3 proteins. Detected in mesophyll cells, guard cells and vascular tissues of the leaves. Expressed in the hilum, where the funiculus is attached during fruit maturation and in the embryo. Also expressed at a lower level in seedlings, root tips and elongation zones, and flowers. Could be detected in mitotically active tissues.

The protein resides in the vacuole membrane. With respect to regulation, could be activated by protein kinase C. Strongly induced by calcium. Blocked by barium, tetraethylammonium (TEA), quinine and quinidine. Its function is as follows. Voltage-independent, large conductance and potassium-selective tonoplast ion channel. Regulated by cytoplasmic calcium and pH. Does not mediate slow-vacuolar (SV) ionic currents, but essential to establish VK currents. Has some permeability for Rb(+) and NH(4)(+), but none for Na(+), Cs(+) or Li(+). Involved in intracellular K(+) redistribution and/or K(+) retranslocation between different tissues. This chain is Two-pore potassium channel 1 (TPK1), found in Arabidopsis thaliana (Mouse-ear cress).